Here is a 333-residue protein sequence, read N- to C-terminus: Phosphoribosylformylglycinamidine cyclo-ligase (333 aa).

The protein belongs to the AIR synthase family.

The protein resides in the cytoplasm. The enzyme catalyses 2-formamido-N(1)-(5-O-phospho-beta-D-ribosyl)acetamidine + ATP = 5-amino-1-(5-phospho-beta-D-ribosyl)imidazole + ADP + phosphate + H(+). The protein operates within purine metabolism; IMP biosynthesis via de novo pathway; 5-amino-1-(5-phospho-D-ribosyl)imidazole from N(2)-formyl-N(1)-(5-phospho-D-ribosyl)glycinamide: step 2/2. The polypeptide is Phosphoribosylformylglycinamidine cyclo-ligase (Methanosarcina barkeri (strain Fusaro / DSM 804)).